The sequence spans 108 residues: UPF0060 membrane protein BH2744 (108 aa).

4 consecutive transmembrane segments (helical) span residues 6–26 (TLFLLAGLAEIGGGYLIWLWL), 31–51 (PVYLGLFGAVALALYGVIATF), 60–80 (VYAAYGGVFIFLAVLWGWWID), and 86–106 (TYDWIGAVICLVGVGIMLWAP).

It belongs to the UPF0060 family.

Its subcellular location is the cell membrane. This chain is UPF0060 membrane protein BH2744, found in Halalkalibacterium halodurans (strain ATCC BAA-125 / DSM 18197 / FERM 7344 / JCM 9153 / C-125) (Bacillus halodurans).